The chain runs to 530 residues: UDP-glucuronosyltransferase 1A7 (530 aa).

The first 25 residues, M1 to A25, serve as a signal peptide directing secretion. 3 N-linked (GlcNAc...) asparagine glycosylation sites follow: N71, N292, and N344. The helical transmembrane segment at V488 to F504 threads the bilayer.

Belongs to the UDP-glycosyltransferase family. Homodimer. Homooligomer. Interacts with UGT1A1, UGT1A3, UGT1A4, UGT1A6, UGT1A8, UGT1A9 and UGT1A10 to form heterodimers. Isoform 1 interacts with isoform 2/i2 suggesting that oligomerization is involved in negative regulation of transferase activity by isoform 2. Isoform 1 also interacts with respective i2 isoforms of UGT1A1, UGT1A3, UGT1A4, UGT1A6, UGT1A8, UGT1A9 and UGT1A10. As to expression, liver and gastric tissue. Isoform 1 and isoform 2 are expressed in esophagus. Neither isoform is expressed in liver, kidney, colon and small intestine.

The protein resides in the endoplasmic reticulum membrane. The catalysed reaction is glucuronate acceptor + UDP-alpha-D-glucuronate = acceptor beta-D-glucuronoside + UDP + H(+). The enzyme catalyses 17alpha-estradiol + UDP-alpha-D-glucuronate = 17alpha-estradiol 3-O-(beta-D-glucuronate) + UDP + H(+). It carries out the reaction prunetin + UDP-alpha-D-glucuronate = prunetin-5-O-beta-D-glucuronide + UDP. It catalyses the reaction 5-epi-5-F2t-IsoP + UDP-alpha-D-glucuronate = 5-epi-5-F2t-IsoP-glucuronide + UDP + H(+). The catalysed reaction is (E)-ferulate + UDP-alpha-D-glucuronate = (E)-ferulic acid beta-D-glucuronate ester + UDP. The enzyme catalyses candesartan + UDP-alpha-D-glucuronate = candesartan O-beta-D-glucuronoside + UDP. It carries out the reaction SN-38 + UDP-alpha-D-glucuronate = SN-38 O-beta-D-glucuronide + UDP + H(+). It catalyses the reaction mycophenolate + UDP-alpha-D-glucuronate = mycophenolate 7-O-beta-D-glucuronide + UDP + H(+). Functionally, UDP-glucuronosyltransferase (UGT) that catalyzes phase II biotransformation reactions in which lipophilic substrates are conjugated with glucuronic acid to increase the metabolite's water solubility, thereby facilitating excretion into either the urine or bile. Essential for the elimination and detoxification of drugs, xenobiotics and endogenous compounds. Catalyzes the glucuronidation of endogenous estrogen hormone epiestradiol. Involved in the glucuronidation of F2-isoprostane (5-epi-5-F2t-IsoP). Involved in the glucuronidation of the phytochemical ferulic acid at the carboxylic acid group. Also catalyzes the glucuronidation of the isoflavones genistein, daidzein, glycitein, formononetin, biochanin A and prunetin, which are phytoestrogens with anticancer and cardiovascular properties. Involved in the glucuronidation of the AGTR1 angiotensin receptor antagonist caderastan, a drug which can inhibit the effect of angiotensin II. Involved in the biotransformation of 7-ethyl-10-hydroxycamptothecin (SN-38), the pharmacologically active metabolite of the anticancer drug irinotecan. Also metabolizes mycophenolate, an immunosuppressive agent. Its function is as follows. Lacks UGT glucuronidation activity but acts as a negative regulator of isoform 1. The chain is UDP-glucuronosyltransferase 1A7 from Homo sapiens (Human).